We begin with the raw amino-acid sequence, 326 residues long: Putative HTH-type transcriptional regulator y4qH (326 aa).

One can recognise an HTH luxR-type domain in the interval 257-322 (AVQKIPALSL…VAAIKAISLG (66 aa)). The segment at residues 281–300 (SWDIGVIMRISENTVNFHIK) is a DNA-binding region (H-T-H motif).

This sequence belongs to the autoinducer-regulated transcriptional regulatory protein family.

The polypeptide is Putative HTH-type transcriptional regulator y4qH (Sinorhizobium fredii (strain NBRC 101917 / NGR234)).